The primary structure comprises 154 residues: Transcriptional repressor NrdR (154 aa).

A zinc finger lies at 3–34; sequence CPTCQYNGTRVVDSRPADDGNSIRRRRECEKC. An ATP-cone domain is found at 49–139; sequence LIVVKKDGAR…VYRQFKDISV (91 aa).

It belongs to the NrdR family. Zn(2+) is required as a cofactor.

Its function is as follows. Negatively regulates transcription of bacterial ribonucleotide reductase nrd genes and operons by binding to NrdR-boxes. This chain is Transcriptional repressor NrdR, found in Listeria monocytogenes serotype 4a (strain HCC23).